Consider the following 232-residue polypeptide: Thiamine import ATP-binding protein ThiQ (232 aa).

One can recognise an ABC transporter domain in the interval 2-230; that stretch reads LKLTDITWLY…KASASALLGI (229 aa). 32–39 contacts ATP; sequence GPSGAGKS.

Belongs to the ABC transporter superfamily. Thiamine importer (TC 3.A.1.19.1) family. In terms of assembly, the complex is composed of two ATP-binding proteins (ThiQ), two transmembrane proteins (ThiP) and a solute-binding protein (ThiB).

It localises to the cell inner membrane. It carries out the reaction thiamine(out) + ATP + H2O = thiamine(in) + ADP + phosphate + H(+). In terms of biological role, part of the ABC transporter complex ThiBPQ involved in thiamine import. Responsible for energy coupling to the transport system. This Escherichia coli (strain K12) protein is Thiamine import ATP-binding protein ThiQ.